We begin with the raw amino-acid sequence, 245 residues long: tRNA1(Val) (adenine(37)-N6)-methyltransferase (245 aa).

It belongs to the methyltransferase superfamily. tRNA (adenine-N(6)-)-methyltransferase family.

It is found in the cytoplasm. It carries out the reaction adenosine(37) in tRNA1(Val) + S-adenosyl-L-methionine = N(6)-methyladenosine(37) in tRNA1(Val) + S-adenosyl-L-homocysteine + H(+). Specifically methylates the adenine in position 37 of tRNA(1)(Val) (anticodon cmo5UAC). The sequence is that of tRNA1(Val) (adenine(37)-N6)-methyltransferase from Escherichia fergusonii (strain ATCC 35469 / DSM 13698 / CCUG 18766 / IAM 14443 / JCM 21226 / LMG 7866 / NBRC 102419 / NCTC 12128 / CDC 0568-73).